The following is a 173-amino-acid chain: ATP synthase subunit b 1 (173 aa).

The helical transmembrane segment at 15–37 (TFWVTVAVLIFLAFFGRKIVGAI) threads the bilayer.

This sequence belongs to the ATPase B chain family. In terms of assembly, F-type ATPases have 2 components, F(1) - the catalytic core - and F(0) - the membrane proton channel. F(1) has five subunits: alpha(3), beta(3), gamma(1), delta(1), epsilon(1). F(0) has three main subunits: a(1), b(2) and c(10-14). The alpha and beta chains form an alternating ring which encloses part of the gamma chain. F(1) is attached to F(0) by a central stalk formed by the gamma and epsilon chains, while a peripheral stalk is formed by the delta and b chains.

Its subcellular location is the cell inner membrane. F(1)F(0) ATP synthase produces ATP from ADP in the presence of a proton or sodium gradient. F-type ATPases consist of two structural domains, F(1) containing the extramembraneous catalytic core and F(0) containing the membrane proton channel, linked together by a central stalk and a peripheral stalk. During catalysis, ATP synthesis in the catalytic domain of F(1) is coupled via a rotary mechanism of the central stalk subunits to proton translocation. Functionally, component of the F(0) channel, it forms part of the peripheral stalk, linking F(1) to F(0). This is ATP synthase subunit b 1 from Acidiphilium cryptum (strain JF-5).